A 157-amino-acid chain; its full sequence is Mitochondrial inner membrane protease subunit 1 (157 aa).

Residues Ser35 and Lys80 contribute to the active site.

This sequence belongs to the peptidase S26 family. IMP1 subfamily. As to quaternary structure, heterodimer of 2 subunits, imp1 and imp2.

The protein resides in the mitochondrion inner membrane. Catalyzes the removal of transit peptides required for the targeting of proteins from the mitochondrial matrix, across the inner membrane, into the inter-membrane space. The chain is Mitochondrial inner membrane protease subunit 1 (imp1) from Schizosaccharomyces pombe (strain 972 / ATCC 24843) (Fission yeast).